Consider the following 757-residue polypeptide: Lysyl oxidase homolog 4 (757 aa).

The first 25 residues, 1-25 (MWFLPAALPLLPLLLLLGQAPPSRP), serve as a signal peptide directing secretion. SRCR domains are found at residues 33–134 (LRLV…VVCN), 160–288 (VRLK…VSCV), 312–412 (VRLR…VRCN), and 422–530 (VRLA…VSCT). 17 disulfides stabilise this stretch: cysteine 59–cysteine 123, cysteine 72–cysteine 133, cysteine 103–cysteine 113, cysteine 192–cysteine 277, cysteine 205–cysteine 287, cysteine 252–cysteine 262, cysteine 337–cysteine 401, cysteine 350–cysteine 411, cysteine 381–cysteine 391, cysteine 451–cysteine 516, cysteine 464–cysteine 529, cysteine 498–cysteine 508, cysteine 559–cysteine 565, cysteine 611–cysteine 659, cysteine 643–cysteine 649, cysteine 671–cysteine 681, and cysteine 718–cysteine 732. A glycan (N-linked (GlcNAc...) asparagine) is linked at asparagine 199. Positions 534–737 (PDLVMNAQLV…WLHNCHTGDS (204 aa)) are lysyl-oxidase like. Histidine 612, histidine 614, and histidine 616 together coordinate Cu cation. Residue asparagine 630 is glycosylated (N-linked (GlcNAc...) asparagine). A cross-link (lysine tyrosylquinone (Lys-Tyr)) is located at residues 639–675 (KASFCLEDTNCPTGMQRRYACANFGEQGVTVGCWDTY). Tyrosine 675 carries the 2',4',5'-topaquinone modification.

It belongs to the lysyl oxidase family. Cu cation is required as a cofactor. Lysine tyrosylquinone residue serves as cofactor. Post-translationally, the lysine tyrosylquinone cross-link (LTQ) is generated by condensation of the epsilon-amino group of a lysine with a topaquinone produced by oxidation of tyrosine. May be proteolytically cleaved by BMP1.

It is found in the secreted. Its subcellular location is the extracellular space. The enzyme catalyses L-lysyl-[protein] + O2 + H2O = (S)-2-amino-6-oxohexanoyl-[protein] + H2O2 + NH4(+). Functionally, catalyzes the oxidative deamination of lysine and hydroxylysine residues in collagen and elastin, resulting in the formation of covalent cross-linkages, and the stabilization of collagen and elastin fibers. The chain is Lysyl oxidase homolog 4 (LOXL4) from Bos taurus (Bovine).